A 313-amino-acid polypeptide reads, in one-letter code: Protein OPG185 (313 aa).

Positions M1–A16 are cleaved as a signal peptide. Residues T17–D274 lie on the Virion surface side of the membrane. N37, N69, N112, N159, N194, and N252 each carry an N-linked (GlcNAc...) asparagine; by host glycan. Residues F275–I295 form a helical membrane-spanning segment. Residues T296–V313 are Intravirion-facing.

Belongs to the orthopoxvirus OPG185 family. Heterodimerizes with OPG040. The heterodimer OPG185-OPG040 interacts with components of the entry fusion complex OPG143 and OPG094. Heterodimer with C3/VPC protein; disulfide-linked. In terms of processing, glycosylated; contains phosphate and sulfate-substituted glycans. O-glycosylation is required for hemagglutination and hemadsorption activities of infected cell membranes.

It localises to the virion membrane. Its subcellular location is the host membrane. Its function is as follows. Prevents cell to cell fusion by interacting with and directing the viral OPG040 protein on the host plasma membrane. The OPG185-OPG040 complex associates with components of the entry fusion complex (EFC) presumably to avoid superinfection and syncytium formation. Via its interaction with C3/VCP protein, protects the infected cell and probably also the extracellular enveloped virus from complement attack. This chain is Protein OPG185 (OPG185), found in Monkeypox virus.